Consider the following 184-residue polypeptide: UPF0149 protein Pmen_0324 (184 aa).

It belongs to the UPF0149 family.

The sequence is that of UPF0149 protein Pmen_0324 from Ectopseudomonas mendocina (strain ymp) (Pseudomonas mendocina).